The following is a 1090-amino-acid chain: Neurofilament heavy polypeptide (1090 aa).

The interval 2–98 is head; the sequence is MSFGSADALL…AVAARSEKEQ (97 aa). 2 positions are modified to phosphoserine: S74 and S122. In terms of domain architecture, IF rod spans 95–411; it reads EKEQLQALND…KLLEGEECRI (317 aa). Residues 99–130 are coil 1A; the sequence is LQALNDRFAGYIDKVRQLEAHNRSLEGEAAAL. The tract at residues 131 to 143 is linker 1; sequence RQQQAGRAAMGEL. Positions 144–242 are coil 1B; that stretch reads YEREVREMRG…QEEVGELLGQ (99 aa). Positions 243–264 are linker 12; the sequence is IQGCGAAQAQAQAEARDALKCD. The coil 2A stretch occupies residues 265–286; sequence VTSALREIRAQLEGHAVQSTLQ. The interval 287–290 is linker 2; that stretch reads SEEW. The tract at residues 291–411 is coil 2B; sequence FRVRLDRLSE…KLLEGEECRI (121 aa). A phosphoserine mark is found at S345, S416, and S419. The interval 412-1090 is tail; the sequence is GFGPSPFSLT…TEDKATKGEK (679 aa). The interval 456 to 1090 is disordered; it reads EGQTEEIRVT…TEDKATKGEK (635 aa). A compositionally biased stretch (acidic residues) spans 468–495; the sequence is VTEEEDKEAQGQEGEEAEEGEEKEEEEG. Over residues 496-506 the composition is skewed to low complexity; sequence AAATSPPAEEA. S508, S523, S529, S535, S541, S547, S553, S559, S565, S571, S577, S583, S589, S595, S601, S607, S613, S619, S625, S631, S637, S643, S649, S655, S661, S667, S673, S679, S685, S691, S697, S703, S709, S715, S721, S727, S733, S739, S745, S751, S757, S763, and S769 each carry phosphoserine. Positions 508–579 are enriched in basic and acidic residues; it reads SPEKETKSRV…KSPAEAKSPA (72 aa). Tandem repeats lie at residues 522 to 527, 528 to 533, 534 to 539, 540 to 545, 546 to 551, 552 to 557, 558 to 563, 564 to 569, 570 to 575, 576 to 581, 582 to 587, 588 to 593, 594 to 599, 600 to 605, 606 to 611, 612 to 617, 618 to 623, 624 to 629, 630 to 635, 636 to 641, 642 to 647, 648 to 653, 654 to 659, 660 to 665, 666 to 671, 672 to 677, 678 to 683, 684 to 689, 690 to 695, 696 to 701, 702 to 707, 708 to 713, 714 to 719, 720 to 725, 726 to 731, 732 to 737, 738 to 743, 744 to 749, 750 to 755, 756 to 761, 762 to 767, and 768 to 773. A 52 X 6 AA approximate tandem repeats of K-S-P-[AGISV]-[EATK]-[APVQ] region spans residues 522 to 892; that stretch reads KSPGEAKSPG…KEEVKSPVKE (371 aa). A compositionally biased stretch (basic and acidic residues) spans 595–633; the sequence is SPSEAKSPAEAKSPAEAKSPAEAKSPAEAKSPAEAKSPA. Over residues 649–717 the composition is skewed to basic and acidic residues; that stretch reads SPSEAKSPAE…KSPAEVKSPG (69 aa). Residues 745-781 are compositionally biased toward basic and acidic residues; sequence SPGEAKSPAEAKSPAEAKSPIEVKSPEKAKTPVKEGA. The 43; approximate repeat unit spans residues 774–779; it reads KTPVKE. A run of 6 repeats spans residues 782-787, 788-793, 794-799, 808-813, 814-819, and 833-838. Residues S783, S789, S795, S809, S815, and S834 each carry the phosphoserine modification. Basic and acidic residues predominate over residues 788-834; that stretch reads KSPEKAKSPVKEDIKPPAEAKSPEKAKSPVKEGAKPPEKAKPLDVKS. T839 carries the phosphothreonine modification. 2 stretches are compositionally biased toward basic and acidic residues: residues 843–964 and 974–1090; these read EEAK…KAVA and GVKE…KGEK. 3 repeat units span residues 858 to 863, 866 to 871, and 887 to 892. Residues S859, S867, S888, and S947 each carry the phosphoserine modification.

Belongs to the intermediate filament family. Forms heterodimers with NEFL; which can further hetero-oligomerize (in vitro). Forms heterodimers with INA (in vitro). Post-translationally, there are a number of repeats of the tripeptide K-S-P, NFH is phosphorylated on a number of the serines in this motif. It is thought that phosphorylation of NFH results in the formation of interfilament cross bridges that are important in the maintenance of axonal caliber. In terms of processing, phosphorylation seems to play a major role in the functioning of the larger neurofilament polypeptides (NF-M and NF-H), the levels of phosphorylation being altered developmentally and coincidentally with a change in the neurofilament function. Phosphorylated in the head and rod regions by the PKC kinase PKN1, leading to the inhibition of polymerization. In terms of tissue distribution, expressed in the sciatic nerve (at protein level).

The protein resides in the cytoplasm. It localises to the cytoskeleton. Its subcellular location is the cell projection. It is found in the axon. Functionally, neurofilaments usually contain three intermediate filament proteins: NEFL, NEFM, and NEFH which are involved in the maintenance of neuronal caliber. NEFH has an important function in mature axons that is not subserved by the two smaller NF proteins. May additionally cooperate with the neuronal intermediate filament proteins PRPH and INA to form neuronal filamentous networks. The polypeptide is Neurofilament heavy polypeptide (Nefh) (Mus musculus (Mouse)).